A 796-amino-acid chain; its full sequence is MSSYQSEYNADEQAAIDKEFTRLANNKSIYLDHAGTTLYAESQVTAAAEQLQRDVICNPHTCRVTGDYVDQVRFKLLEFFNTKEDEYHVIFTANATAALSLVAENFDFGRQGNFHYCQENHTSVLGMRERVQARAMYMLKEEEITGMASVPSAANGVSGSSPGDNSLVTFSAQCNFSGYKIPLAAIAGIQKQGLPHGLGKKISGEAPQTTDNNNYYVCLDAASFVATNPLDLQRYRPDYVCISFYKIFGYPTGVGALLVSRRGAEAFRKKRNFFGGGTINYAYPHAMDHQLREVFHQRYEDGTLPFLSIVGLLEGFRTLERLVPRRSVNGGDVATMERISRHVHGLAQHLEKQLRQLKYPNGQPLIELYNRVGYEERHRQGGIVAFNVRTDAGPFVGFGEIACVAALQGILLRTGCFCNIGACQRYLGLDETMMDAIYKRAGRICGDYYDLIDGQPTGAVRVSFGYMTRRQDVDELLKMLHLSYLATKPQQRLQLIEEQAGELPKALKERAQRLRPQLLQLAIYPVKSCAAFKIEEGGGSGGGGSGGTWPLTAQGLQYDREWMIVDMNGMAVTQKRCSELCLIRPLIRDDQLVLHFGDSPDGVSLPLSLADQAENSSRCRSKVCRQPVEGLDCGDEVALWLSQHLGLEGLRLLRQSSQRSTTNGVRQQQKLSLVNQAQFLLVNRSSVRSLQFEESLDETVDRFRANIIIDTGSAFEELSYKQLTIGQVQFQVEGPCQRCDMICINQRTGERSPETLTTISRLQSGKMRFGIYISRISTENNKESQHLTCGDVVVVT.

Position 246 is an N6-(pyridoxal phosphate)lysine (Lys-246). Cys-418 is an active-site residue. Positions 650–796 constitute an MOSC domain; that stretch reads LRLLRQSSQR…LTCGDVVVVT (147 aa). Ser-752 carries the post-translational modification Phosphoserine.

The protein belongs to the class-V pyridoxal-phosphate-dependent aminotransferase family. MOCOS subfamily. Pyridoxal 5'-phosphate serves as cofactor.

The enzyme catalyses Mo-molybdopterin + L-cysteine + AH2 = thio-Mo-molybdopterin + L-alanine + A + H2O. In terms of biological role, sulfurates the molybdenum cofactor. Sulfation of molybdenum is essential for xanthine dehydrogenase (XDH) and aldehyde oxidase (ADO) enzymes in which molybdenum cofactor is liganded by 1 oxygen and 1 sulfur atom in active form. The polypeptide is Molybdenum cofactor sulfurase (Drosophila persimilis (Fruit fly)).